A 95-amino-acid polypeptide reads, in one-letter code: Integration host factor subunit beta (95 aa).

This sequence belongs to the bacterial histone-like protein family. Heterodimer of an alpha and a beta chain.

This protein is one of the two subunits of integration host factor, a specific DNA-binding protein that functions in genetic recombination as well as in transcriptional and translational control. The chain is Integration host factor subunit beta from Klebsiella pneumoniae subsp. pneumoniae (strain ATCC 700721 / MGH 78578).